The primary structure comprises 156 residues: Ribosomal RNA large subunit methyltransferase H (156 aa).

S-adenosyl-L-methionine is bound by residues Leu73, Gly104, and 123–128 (LSSLTL).

Belongs to the RNA methyltransferase RlmH family. As to quaternary structure, homodimer.

It is found in the cytoplasm. The catalysed reaction is pseudouridine(1915) in 23S rRNA + S-adenosyl-L-methionine = N(3)-methylpseudouridine(1915) in 23S rRNA + S-adenosyl-L-homocysteine + H(+). Functionally, specifically methylates the pseudouridine at position 1915 (m3Psi1915) in 23S rRNA. In Neisseria gonorrhoeae (strain NCCP11945), this protein is Ribosomal RNA large subunit methyltransferase H.